The primary structure comprises 548 residues: Membrane protein insertase YidC (548 aa).

A helical transmembrane segment spans residues 6–26; the sequence is NLLVIALLFVSFMIWQAWEQD. Residues 28-55 are disordered; the sequence is NPQPQAQQTTQTTTTAAGSAADQGVPAS. Low complexity predominate over residues 30–50; it reads QPQAQQTTQTTTTAAGSAADQ. A run of 4 helical transmembrane segments spans residues 350 to 370, 420 to 440, 458 to 478, and 499 to 519; these read FVGN…GIMY, LGGC…YYML, LSAQ…MFFI, and PVIF…YYIV.

The protein belongs to the OXA1/ALB3/YidC family. Type 1 subfamily. In terms of assembly, interacts with the Sec translocase complex via SecD. Specifically interacts with transmembrane segments of nascent integral membrane proteins during membrane integration.

Its subcellular location is the cell inner membrane. In terms of biological role, required for the insertion and/or proper folding and/or complex formation of integral membrane proteins into the membrane. Involved in integration of membrane proteins that insert both dependently and independently of the Sec translocase complex, as well as at least some lipoproteins. Aids folding of multispanning membrane proteins. The polypeptide is Membrane protein insertase YidC (Escherichia coli O127:H6 (strain E2348/69 / EPEC)).